The following is a 388-amino-acid chain: Succinate--CoA ligase [ADP-forming] subunit beta (388 aa).

An ATP-grasp domain is found at Lys9–His244. Residues Lys46, Gly53–Gly55, Glu99, Thr102, and Glu107 contribute to the ATP site. Mg(2+) is bound by residues Asn199 and Asp213. Substrate-binding positions include Asn264 and Gly321–Val323.

Belongs to the succinate/malate CoA ligase beta subunit family. Heterotetramer of two alpha and two beta subunits. It depends on Mg(2+) as a cofactor.

The catalysed reaction is succinate + ATP + CoA = succinyl-CoA + ADP + phosphate. It carries out the reaction GTP + succinate + CoA = succinyl-CoA + GDP + phosphate. It participates in carbohydrate metabolism; tricarboxylic acid cycle; succinate from succinyl-CoA (ligase route): step 1/1. In terms of biological role, succinyl-CoA synthetase functions in the citric acid cycle (TCA), coupling the hydrolysis of succinyl-CoA to the synthesis of either ATP or GTP and thus represents the only step of substrate-level phosphorylation in the TCA. The beta subunit provides nucleotide specificity of the enzyme and binds the substrate succinate, while the binding sites for coenzyme A and phosphate are found in the alpha subunit. The sequence is that of Succinate--CoA ligase [ADP-forming] subunit beta from Erwinia tasmaniensis (strain DSM 17950 / CFBP 7177 / CIP 109463 / NCPPB 4357 / Et1/99).